Here is a 339-residue protein sequence, read N- to C-terminus: MO25-like protein 3 (339 aa).

The protein belongs to the Mo25 family.

In Caenorhabditis elegans, this protein is MO25-like protein 3 (mop-25.3).